The sequence spans 92 residues: Small ribosomal subunit protein uS19c (92 aa).

Belongs to the universal ribosomal protein uS19 family.

Its subcellular location is the plastid. The protein resides in the chloroplast. Its function is as follows. Protein S19 forms a complex with S13 that binds strongly to the 16S ribosomal RNA. This Platanus occidentalis (Sycamore) protein is Small ribosomal subunit protein uS19c.